Here is a 476-residue protein sequence, read N- to C-terminus: NAC domain-containing protein 86 (476 aa).

The NAC domain occupies 6–157; the sequence is LPPGFRFHPT…AYALCRVFKK (152 aa). A DNA-binding region spans residues 105–163; that stretch reads IGTKKTLVYYRGRAPHGIRTGWVMHEYRLDESECEPSAFGMQDAYALCRVFKKIVIEAK.

In terms of tissue distribution, expressed in a few sieve element cells before enucleation and in phloem-pole pericycle cells.

It localises to the nucleus. In terms of biological role, transcription factor directing sieve element enucleation and cytosol degradation. Not required for formation of lytic vacuoles. Regulates, with NAC045, the transcription of NEN1, NEN2, NEN3, NEN4, RTM1, RTM2, UBP16, PLDZETA, ABCB10 and At1g26450. This is NAC domain-containing protein 86 from Arabidopsis thaliana (Mouse-ear cress).